We begin with the raw amino-acid sequence, 110 residues long: Ubiquitin-related modifier 1 (110 aa).

The residue at position 110 (Gly110) is a 1-thioglycine. Residue Gly110 forms a Glycyl lysine isopeptide (Gly-Lys) (interchain with K-? in acceptor proteins) linkage.

It belongs to the URM1 family. As to quaternary structure, homodimer; homodimerization may provide an autoprotection to the highly active C-terminal residue before attacking its substrates. Forms a conjugate with the target protein AHP1. C-terminal thiocarboxylation occurs in 2 steps, it is first acyl-adenylated (-COAMP) via the hesA/moeB/thiF part of UBA4, then thiocarboxylated (-COSH) via the rhodanese domain of UBA4.

Its subcellular location is the cytoplasm. It functions in the pathway tRNA modification; 5-methoxycarbonylmethyl-2-thiouridine-tRNA biosynthesis. Functionally, acts as a sulfur carrier required for 2-thiolation of mcm(5)S(2)U at tRNA wobble positions of cytosolic tRNA(Lys), tRNA(Glu) and tRNA(Gln). Serves as sulfur donor in tRNA 2-thiolation reaction by being thiocarboxylated (-COSH) at its C-terminus by the MOCS3 homolog UBA4. The sulfur is then transferred to tRNA to form 2-thiolation of mcm(5)S(2)U. Prior mcm(5) tRNA modification by the elongator complex is required for 2-thiolation. Also acts as a ubiquitin-like protein (UBL) that is covalently conjugated via an isopeptide bond to lysine residues of target proteins such as AHP1. Conjugation does not depend on the canonical cascade of E2 ubiquitin-conjugating enzymes and/or E3 ligases. The conjugation reaction requires a thiocarboxylated C-terminus of URM1 and a peroxidatic cysteine in the target protein, as the sulfur atom of the URM1 thiocarboxyl group is transferred to redox-active cysteine residues in the target protein. Oxidative stress specifically induces the formation of UBL-protein conjugates. Covalent modification with URM1 promotes the phase separation of a wide range of proteins into condensates like stress granules. The chain is Ubiquitin-related modifier 1 from Chaetomium thermophilum (strain DSM 1495 / CBS 144.50 / IMI 039719) (Thermochaetoides thermophila).